The sequence spans 190 residues: Female-specific histamine-binding protein 1 (190 aa).

The first 18 residues, 1 to 18 (MKLLLSLAFVLALSQVKA), serve as a signal peptide directing secretion. Histamine is bound by residues Y54, D57, W60, E100, Y118, E153, and W155. Intrachain disulfides connect C66–C187 and C137–C166.

It belongs to the calycin superfamily. Histamine-binding salivary protein family. Monomer. Expressed in salivary glands.

It is found in the secreted. Its function is as follows. Salivary tick protein that acts by scavenging histamine at the wound site, outcompeting histamine receptors for histamine, thereby overcoming host inflammatory responses. Binds histamine with a high-affinity (Kd=18 nM). Contains two binding histamine sites (H and L), that appear to bind histamine with differing affinities (high and low). In vivo, when tested on a mouse asthma model, shows a profound inhibitory effect on allergic asthma. Aerosol administration of this protein prevents airway hyperreactivity and abrogates peribronchial inflammation, eosinophil recruitment, mucus hypersecretion, and interleukins (IL-4 and IL-5) secretion. In addition, when tested on a mouse model of acute respiratory distress syndrome (ARDS), it attenuates endotoxin-induced acute lung injury. The polypeptide is Female-specific histamine-binding protein 1 (Rhipicephalus appendiculatus (Brown ear tick)).